The primary structure comprises 298 residues: MGLAAPRKRTKISHDPNNTNWARSTSGFGHKILSSQGWTPGSFLGARDAAHADMFTAASAGHIRVVVKDDTLGLGARAGRDPNEPTGLDAFKGLLGRLNGKSDAELAADQRKADDIKLARYAAFKWQAVRFVSGGLLAQEKLERLPERESVQQSRAAVETSDSNRNSENDASKVSKKKKKKTSSDSSSDEQSSRSEKRREKKEKKDKKEKKEKKDKKDKKRKRAEEDNDASQKSASETPAPEKESTGLESDSTSVSVVKASRERRPLGRQIVRGRHIAQKKRALMDDKSLNEIFMVKA.

Positions 1–11 are enriched in basic residues; it reads MGLAAPRKRTK. Positions 1–23 are disordered; that stretch reads MGLAAPRKRTKISHDPNNTNWAR. Residues 25–79 enclose the G-patch domain; sequence TSGFGHKILSSQGWTPGSFLGARDAAHADMFTAASAGHIRVVVKDDTLGLGARAG. The tract at residues 145-274 is disordered; it reads LPERESVQQS…RPLGRQIVRG (130 aa). The span at 151 to 164 shows a compositional bias: polar residues; the sequence is VQQSRAAVETSDSN. Residues 199-222 show a composition bias toward basic residues; the sequence is REKKEKKDKKEKKEKKDKKDKKRK. The segment covering 247–256 has biased composition (polar residues); the sequence is GLESDSTSVS.

The protein belongs to the PINX1 family.

The protein localises to the nucleus. Its subcellular location is the nucleolus. Involved in rRNA-processing at A0, A1 and A2 sites and negatively regulates telomerase. This chain is Protein pxr1 (pxr1), found in Aspergillus terreus (strain NIH 2624 / FGSC A1156).